A 642-amino-acid polypeptide reads, in one-letter code: Threonine--tRNA ligase (642 aa).

Residues 1 to 63 (MSTVTVTLPD…TADVELEIVT (63 aa)) form the TGS domain. Positions 242–533 (DHRKIGQEMD…LTEHYNGKFP (292 aa)) are catalytic. Residues Cys-334, His-385, and His-510 each contribute to the Zn(2+) site.

The protein belongs to the class-II aminoacyl-tRNA synthetase family. In terms of assembly, homodimer. The cofactor is Zn(2+).

It localises to the cytoplasm. The catalysed reaction is tRNA(Thr) + L-threonine + ATP = L-threonyl-tRNA(Thr) + AMP + diphosphate + H(+). Catalyzes the attachment of threonine to tRNA(Thr) in a two-step reaction: L-threonine is first activated by ATP to form Thr-AMP and then transferred to the acceptor end of tRNA(Thr). The chain is Threonine--tRNA ligase from Haloarcula marismortui (strain ATCC 43049 / DSM 3752 / JCM 8966 / VKM B-1809) (Halobacterium marismortui).